The chain runs to 687 residues: Protein SDA1 homolog (687 aa).

Disordered stretches follow at residues 517 to 549, 561 to 587, and 615 to 687; these read SSDE…SQMR, MKQL…EPQG, and TVIA…KSKI. Acidic residues predominate over residues 520-537; that stretch reads EEQEDEDPSGENQEGEED. The span at 644 to 666 shows a compositional bias: basic residues; sequence EKRRKKNFMMMRHNKLVRGKTKR. The span at 667–680 shows a compositional bias: basic and acidic residues; sequence SFRDKQIALRDSLL.

This sequence belongs to the SDA1 family.

The protein localises to the nucleus. Its subcellular location is the nucleolus. Functionally, required for 60S pre-ribosomal subunits export to the cytoplasm. In Nematostella vectensis (Starlet sea anemone), this protein is Protein SDA1 homolog (sdad1).